The sequence spans 209 residues: Uracil phosphoribosyltransferase (209 aa).

5-phospho-alpha-D-ribose 1-diphosphate is bound by residues Arg-79, Arg-104, and Asp-131 to Ser-139. Uracil is bound by residues Ile-194 and Gly-199–Ala-201. Asp-200 lines the 5-phospho-alpha-D-ribose 1-diphosphate pocket.

It belongs to the UPRTase family. It depends on Mg(2+) as a cofactor.

The catalysed reaction is UMP + diphosphate = 5-phospho-alpha-D-ribose 1-diphosphate + uracil. It participates in pyrimidine metabolism; UMP biosynthesis via salvage pathway; UMP from uracil: step 1/1. With respect to regulation, allosterically activated by GTP. In terms of biological role, catalyzes the conversion of uracil and 5-phospho-alpha-D-ribose 1-diphosphate (PRPP) to UMP and diphosphate. The chain is Uracil phosphoribosyltransferase from Francisella tularensis subsp. novicida (strain U112).